We begin with the raw amino-acid sequence, 639 residues long: 3D-(3,5/4)-trihydroxycyclohexane-1,2-dione hydrolase (639 aa).

E62 contributes to the thiamine diphosphate binding site. Residues 438–518 form a thiamine pyrophosphate binding region; that stretch reads SLPGDLQRMW…INILLFDNCG (81 aa). 2 residues coordinate Mg(2+): D489 and N516.

The protein belongs to the TPP enzyme family. Mg(2+) is required as a cofactor. Requires thiamine diphosphate as cofactor.

The catalysed reaction is 3D-3,5/4-trihydroxycyclohexane-1,2-dione + H2O = 5-deoxy-D-glucuronate + H(+). Its pathway is polyol metabolism; myo-inositol degradation into acetyl-CoA; acetyl-CoA from myo-inositol: step 3/7. Its function is as follows. Involved in the cleavage of the C1-C2 bond of 3D-(3,5/4)-trihydroxycyclohexane-1,2-dione (THcHDO) to yield 5-deoxy-glucuronate (5DG). This Clostridium perfringens (strain ATCC 13124 / DSM 756 / JCM 1290 / NCIMB 6125 / NCTC 8237 / Type A) protein is 3D-(3,5/4)-trihydroxycyclohexane-1,2-dione hydrolase.